The chain runs to 83 residues: RNA-binding protein Hfq (83 aa).

The 60-residue stretch at 9 to 68 folds into the Sm domain; that stretch reads DPYLNILRKERIPVSIFLVNGIKLQGQIESFDQFVILLRNTVSQMVYKHAISTVVPSRNV.

It belongs to the Hfq family. In terms of assembly, homohexamer.

Its function is as follows. RNA chaperone that binds small regulatory RNA (sRNAs) and mRNAs to facilitate mRNA translational regulation in response to envelope stress, environmental stress and changes in metabolite concentrations. Also binds with high specificity to tRNAs. The polypeptide is RNA-binding protein Hfq (Chromohalobacter salexigens (strain ATCC BAA-138 / DSM 3043 / CIP 106854 / NCIMB 13768 / 1H11)).